The chain runs to 189 residues: Probable nicotinate-nucleotide adenylyltransferase (189 aa).

The protein belongs to the NadD family.

It carries out the reaction nicotinate beta-D-ribonucleotide + ATP + H(+) = deamido-NAD(+) + diphosphate. Its pathway is cofactor biosynthesis; NAD(+) biosynthesis; deamido-NAD(+) from nicotinate D-ribonucleotide: step 1/1. Its function is as follows. Catalyzes the reversible adenylation of nicotinate mononucleotide (NaMN) to nicotinic acid adenine dinucleotide (NaAD). The chain is Probable nicotinate-nucleotide adenylyltransferase from Hydrogenobaculum sp. (strain Y04AAS1).